Consider the following 267-residue polypeptide: Dihydropteroate synthase (267 aa).

A Pterin-binding domain is found at 1-251 (MTKTKIMGIL…NVELNAKLAK (251 aa)). Asn11 is a binding site for Mg(2+). (7,8-dihydropterin-6-yl)methyl diphosphate-binding positions include Thr51, Asp84, Asn103, Asp167, Lys203, and 239-241 (RVH).

Belongs to the DHPS family. As to quaternary structure, homodimer. Mg(2+) serves as cofactor.

The enzyme catalyses (7,8-dihydropterin-6-yl)methyl diphosphate + 4-aminobenzoate = 7,8-dihydropteroate + diphosphate. The protein operates within cofactor biosynthesis; tetrahydrofolate biosynthesis; 7,8-dihydrofolate from 2-amino-4-hydroxy-6-hydroxymethyl-7,8-dihydropteridine diphosphate and 4-aminobenzoate: step 1/2. In terms of biological role, catalyzes the condensation of para-aminobenzoate (pABA) with 6-hydroxymethyl-7,8-dihydropterin diphosphate (DHPt-PP) to form 7,8-dihydropteroate (H2Pte), the immediate precursor of folate derivatives. This is Dihydropteroate synthase (folP) from Staphylococcus aureus (strain MSSA476).